The chain runs to 163 residues: MLVFTTSPDHVDELNEFVQQLNPVAFTRVLRGLGKVLASYNDKAVEEDTLKKSSTGSLPSGQQVHCQYVLDDPNHVEGISVDQSLQVPKFEKNWLISPPGSPPVGWEPIVEESPNSQHLAHDIQLKLDELGNALLNDHSAGPQIVISEHNNTKETSPSRQFEH.

A disordered region spans residues 142–163 (PQIVISEHNNTKETSPSRQFEH). Residues 153 to 163 (KETSPSRQFEH) show a composition bias toward polar residues.

This sequence belongs to the RCAN family.

Its function is as follows. Inhibits calcineurin-dependent transcriptional responses by binding to the catalytic domain of calcineurin. This is an uncharacterized protein from Schizosaccharomyces pombe (strain 972 / ATCC 24843) (Fission yeast).